A 256-amino-acid chain; its full sequence is MKIITCYKCVPDEQDIAVNNADGSLDFSKADAKISQYDLNAIEAACQLKQQAAEAQVTALSVGGKALTNAKGRKDVLSRGPDELIVVIDDQFEQALPQQTASVLAAAAQKAGFDLILCGDGSSDLYAQQVGLLVGEILNIPAVNGVSKIISLTADTLTVERELEDETETLSIPLPAVVAVSTDINSPQIPSMKAILGAAKKPVQVWSAADIGFNAEAAWSEQQVAAPKQRERQRIVIEGDGEEQIAAFAENLRKVI.

Belongs to the ETF beta-subunit/FixA family. In terms of assembly, heterodimer of FixA and FixB.

The protein operates within amine and polyamine metabolism; carnitine metabolism. Required for anaerobic carnitine reduction. May bring reductant to CaiA. The protein is Protein FixA of Escherichia coli O6:H1 (strain CFT073 / ATCC 700928 / UPEC).